The sequence spans 140 residues: Gonadotropin subunit beta-2 (140 aa).

Residues 1 to 23 (MSVPASSFLLLCFLMNSFSPAQS) form the signal peptide. Intrachain disulfides connect C29–C77, C43–C92, C46–C130, C54–C108, C58–C110, and C113–C120. N-linked (GlcNAc...) asparagine glycosylation is present at N33.

This sequence belongs to the glycoprotein hormones subunit beta family. Heterodimer of an alpha and a beta chain.

The protein resides in the secreted. In terms of biological role, involved in gametogenesis and steroidogenesis. The sequence is that of Gonadotropin subunit beta-2 (cgbb) from Ictalurus punctatus (Channel catfish).